The primary structure comprises 212 residues: Ribosomal RNA small subunit methyltransferase G (212 aa).

S-adenosyl-L-methionine contacts are provided by residues Gly-80, Leu-85, 131–132 (AE), and Arg-146.

It belongs to the methyltransferase superfamily. RNA methyltransferase RsmG family.

The protein resides in the cytoplasm. It carries out the reaction guanosine(527) in 16S rRNA + S-adenosyl-L-methionine = N(7)-methylguanosine(527) in 16S rRNA + S-adenosyl-L-homocysteine. Functionally, specifically methylates the N7 position of guanine in position 527 of 16S rRNA. In Stenotrophomonas maltophilia (strain K279a), this protein is Ribosomal RNA small subunit methyltransferase G.